A 729-amino-acid chain; its full sequence is DNA replication licensing factor MCM5 (729 aa).

The MCM domain maps to 326–532 (AYVKICSMIG…DQDKRIASHI (207 aa)). Residue 376–383 (GDPSTAKS) coordinates ATP. An Arginine finger motif is present at residues 508-511 (SRFD).

This sequence belongs to the MCM family. As to quaternary structure, component of the minichromosome maintenance (MCM) complex, a heterotetramer composed of MCM2, MCM3, MCM4, MCM5, MCM6 and MCM7.

The protein localises to the nucleus. It carries out the reaction ATP + H2O = ADP + phosphate + H(+). Probable component of the MCM2-7 complex (MCM complex) that may function as a DNA helicase and which is essential to undergo a single round of replication initiation and elongation per cell cycle in eukaryotic cells. The sequence is that of DNA replication licensing factor MCM5 (MCM5) from Oryza sativa subsp. indica (Rice).